The sequence spans 317 residues: Aspartate carbamoyltransferase catalytic subunit (317 aa).

Residues Arg66 and Thr67 each contribute to the carbamoyl phosphate site. Lys94 is a binding site for L-aspartate. Carbamoyl phosphate-binding residues include Arg116, His144, and Gln147. L-aspartate contacts are provided by Arg177 and Arg231. Residues Gly272 and Pro273 each contribute to the carbamoyl phosphate site.

Belongs to the aspartate/ornithine carbamoyltransferase superfamily. ATCase family. In terms of assembly, heterododecamer (2C3:3R2) of six catalytic PyrB chains organized as two trimers (C3), and six regulatory PyrI chains organized as three dimers (R2).

It carries out the reaction carbamoyl phosphate + L-aspartate = N-carbamoyl-L-aspartate + phosphate + H(+). The protein operates within pyrimidine metabolism; UMP biosynthesis via de novo pathway; (S)-dihydroorotate from bicarbonate: step 2/3. In terms of biological role, catalyzes the condensation of carbamoyl phosphate and aspartate to form carbamoyl aspartate and inorganic phosphate, the committed step in the de novo pyrimidine nucleotide biosynthesis pathway. The polypeptide is Aspartate carbamoyltransferase catalytic subunit (Rhodopseudomonas palustris (strain ATCC BAA-98 / CGA009)).